The sequence spans 288 residues: Elongation factor Ts (288 aa).

The interval 82 to 85 is involved in Mg(2+) ion dislocation from EF-Tu; it reads TDFV.

The protein belongs to the EF-Ts family.

It localises to the cytoplasm. In terms of biological role, associates with the EF-Tu.GDP complex and induces the exchange of GDP to GTP. It remains bound to the aminoacyl-tRNA.EF-Tu.GTP complex up to the GTP hydrolysis stage on the ribosome. The protein is Elongation factor Ts of Prosthecochloris aestuarii (strain DSM 271 / SK 413).